Consider the following 905-residue polypeptide: MTDNNSSNLVPVNIEDEMKVSYLDYAMSVIVSRAIPDVRDGLKPVHRRIIYSMHEAGNHANRAYRKSARIVGDVMGKYHPHGDSAIYDSLVRMAQDFSLRLPLVDGQGNFGSLDGDAAAAMRYTESRMAKVAHKLIEDIDKETVSFNPNYDGSEEEPSVLPSMFPNLLVNGSGGIAVGMATNIPPHNLGEVIDACCLYVDNNDIEILDLLEVVKGPDFPTSGIILGVNGIKSAYLTGRGSIAIRGRAEIENLGNGRQAIIITEIPYMVNKARLVEKIAEMVKEKRIEGISDLRDESNKNGIRIYIELKKDIVAEVVLNQIYSCTQLQTSFGVIMLALKDGLPKVMNLKEVIAAFVSFREVVITNRTIYLLNKARDKAHILLGLTIAVSNIDEIIRIIKAASDPNAAKQELMARSWDALNILPLVKLVDDKAMLNEEGKCSFTEAQAKAILEMRLQRLTAMEKNKLEEDLKNLATEITEYLNILGSRERLLEILKEELIKVKEEFATPRLTSIEFGEFDQDIEDLIQREEMVVTVTLGGYIKRVPLSSYRAQKRGGKGRSGLSMRDEDITTQVFVGSTHTPMLFFSNIGQVYSLKLYKLPLSNPQGKGRPMVNILPLKGDEHITNIMPLPENQDEWDNLNIMFATAKGNIRRSDLLDFKKIQSNGKIAIRLDEDDKLIDVKPCKEDEHILLATKSGKALRFPVESLRVIKSRTSDGVRGMRLAEDDSVISMTVLKGIKATREERDAYLSVSWEKRLEIAKGEEFNSEELGVDLTAESILEMANSEEFILTVTENGFGKRSSAYGYRITDRGGSGIINMDINDKTGLVVGVMPVKMDDELMLITNSGKLIRCKLETVRITGRNTSGVTLFRLDDGEKVVSASLIAESSDDNEEDSEFEEEVAEEGSE.

The Topo IIA-type catalytic domain maps to 35–524 (IPDVRDGLKP…GEFDQDIEDL (490 aa)). The active-site O-(5'-phospho-DNA)-tyrosine intermediate is Tyr123. Residues 551–557 (QKRGGKG) carry the GyrA-box motif. Residues 882–905 (IAESSDDNEEDSEFEEEVAEEGSE) form a disordered region. Over residues 885 to 905 (SSDDNEEDSEFEEEVAEEGSE) the composition is skewed to acidic residues.

It belongs to the type II topoisomerase GyrA/ParC subunit family. As to quaternary structure, heterotetramer, composed of two GyrA and two GyrB chains. In the heterotetramer, GyrA contains the active site tyrosine that forms a transient covalent intermediate with DNA, while GyrB binds cofactors and catalyzes ATP hydrolysis.

It localises to the cytoplasm. The enzyme catalyses ATP-dependent breakage, passage and rejoining of double-stranded DNA.. A type II topoisomerase that negatively supercoils closed circular double-stranded (ds) DNA in an ATP-dependent manner to modulate DNA topology and maintain chromosomes in an underwound state. Negative supercoiling favors strand separation, and DNA replication, transcription, recombination and repair, all of which involve strand separation. Also able to catalyze the interconversion of other topological isomers of dsDNA rings, including catenanes and knotted rings. Type II topoisomerases break and join 2 DNA strands simultaneously in an ATP-dependent manner. This is DNA gyrase subunit A from Rickettsia bellii (strain RML369-C).